We begin with the raw amino-acid sequence, 212 residues long: Probable GTP-binding protein EngB (212 aa).

Residues 38-210 form the EngB-type G domain; that stretch reads ALPQIAFVGK…KTSLAKCIKL (173 aa). GTP is bound by residues 46–53, 73–77, 91–94, 158–161, and 189–191; these read GKSNVGKS, GRTRQ, DLPG, TKSD, and VSS. Positions 53 and 75 each coordinate Mg(2+).

Belongs to the TRAFAC class TrmE-Era-EngA-EngB-Septin-like GTPase superfamily. EngB GTPase family. Mg(2+) is required as a cofactor.

Its function is as follows. Necessary for normal cell division and for the maintenance of normal septation. This Rickettsia bellii (strain OSU 85-389) protein is Probable GTP-binding protein EngB.